Reading from the N-terminus, the 89-residue chain is Probable oxaloacetate decarboxylase gamma chain (89 aa).

The helical transmembrane segment at 13–33 threads the bilayer; sequence LMLSGMGFVITFLLILIWAIT.

The protein belongs to the OadG family. In terms of assembly, heterotrimer of an alpha, a beta and a gamma subunit. The cofactor is Na(+).

The protein localises to the cell membrane. The enzyme catalyses oxaloacetate + 2 Na(+)(in) + H(+) = pyruvate + 2 Na(+)(out) + CO2. In terms of biological role, catalyzes the decarboxylation of oxaloacetate coupled to Na(+) translocation. The protein is Probable oxaloacetate decarboxylase gamma chain of Actinobacillus succinogenes (strain ATCC 55618 / DSM 22257 / CCUG 43843 / 130Z).